Reading from the N-terminus, the 326-residue chain is Ribosome biogenesis protein BRX1 homolog (326 aa).

Over residues 1–17 the composition is skewed to basic and acidic residues; it reads MVKPSKILEKIKKRTEP. Positions 1 to 66 are disordered; sequence MVKPSKILEK…EENKNIEENK (66 aa). Residues 22–57 are compositionally biased toward acidic residues; the sequence is VVEEESDEEIIEQEGSEEEEEIVEEESEEEEEEVEE. The region spanning 75-268 is the Brix domain; sequence KRVLFTSTRG…IDKIFSDGFG (194 aa).

The protein belongs to the BRX1 family.

It localises to the nucleus. Its subcellular location is the nucleolus. Functionally, required for biogenesis of the 60S ribosomal subunit. The polypeptide is Ribosome biogenesis protein BRX1 homolog (bxdc2) (Dictyostelium discoideum (Social amoeba)).